Consider the following 485-residue polypeptide: ATP synthase subunit beta (485 aa).

Positions 1–20 (MSTTKTTKMTVKTGSKGTSG) are disordered. Position 170 to 177 (170 to 177 (GGAGVGKT)) interacts with ATP.

Belongs to the ATPase alpha/beta chains family. As to quaternary structure, F-type ATPases have 2 components, CF(1) - the catalytic core - and CF(0) - the membrane proton channel. CF(1) has five subunits: alpha(3), beta(3), gamma(1), delta(1), epsilon(1). CF(0) has three main subunits: a(1), b(2) and c(9-12). The alpha and beta chains form an alternating ring which encloses part of the gamma chain. CF(1) is attached to CF(0) by a central stalk formed by the gamma and epsilon chains, while a peripheral stalk is formed by the delta and b chains.

The protein localises to the cell membrane. The enzyme catalyses ATP + H2O + 4 H(+)(in) = ADP + phosphate + 5 H(+)(out). Its function is as follows. Produces ATP from ADP in the presence of a proton gradient across the membrane. The catalytic sites are hosted primarily by the beta subunits. This is ATP synthase subunit beta from Mycobacterium leprae (strain TN).